The chain runs to 367 residues: Cytochrome b (367 aa).

A run of 4 helical transmembrane segments spans residues 25–45 (FGSM…FLAI), 69–90 (WIMQ…YIHI), 105–125 (WLSG…GYVL), and 170–190 (FFAL…IHII). Residues His-75 and His-89 each contribute to the heme b site. Heme b is bound by residues His-174 and His-188. An a ubiquinone-binding site is contributed by His-193. The next 4 membrane-spanning stretches (helical) occupy residues 218–238 (YKDV…MSFT), 280–300 (LGGT…PFTH), 312–332 (LTQA…WTAT), and 339–358 (FIFI…IINP).

Belongs to the cytochrome b family. As to quaternary structure, the cytochrome bc1 complex contains 3 respiratory subunits (MT-CYB, CYC1 and UQCRFS1), 2 core proteins (UQCRC1 and UQCRC2) and probably 6 low-molecular weight proteins. Heme b serves as cofactor.

It localises to the mitochondrion inner membrane. Its function is as follows. Component of the ubiquinol-cytochrome c reductase complex (complex III or cytochrome b-c1 complex) that is part of the mitochondrial respiratory chain. The b-c1 complex mediates electron transfer from ubiquinol to cytochrome c. Contributes to the generation of a proton gradient across the mitochondrial membrane that is then used for ATP synthesis. This is Cytochrome b (MT-CYB) from Austrelaps superbus (Lowland copperhead snake).